The sequence spans 314 residues: Lipoyl synthase (314 aa).

Positions 60, 65, 71, 86, 90, 93, and 300 each coordinate [4Fe-4S] cluster. A Radical SAM core domain is found at 72-289; sequence FRKGTATFMI…RQFGLSIGFS (218 aa).

Belongs to the radical SAM superfamily. Lipoyl synthase family. The cofactor is [4Fe-4S] cluster.

The protein localises to the cytoplasm. It catalyses the reaction [[Fe-S] cluster scaffold protein carrying a second [4Fe-4S](2+) cluster] + N(6)-octanoyl-L-lysyl-[protein] + 2 oxidized [2Fe-2S]-[ferredoxin] + 2 S-adenosyl-L-methionine + 4 H(+) = [[Fe-S] cluster scaffold protein] + N(6)-[(R)-dihydrolipoyl]-L-lysyl-[protein] + 4 Fe(3+) + 2 hydrogen sulfide + 2 5'-deoxyadenosine + 2 L-methionine + 2 reduced [2Fe-2S]-[ferredoxin]. Its pathway is protein modification; protein lipoylation via endogenous pathway; protein N(6)-(lipoyl)lysine from octanoyl-[acyl-carrier-protein]: step 2/2. Functionally, catalyzes the radical-mediated insertion of two sulfur atoms into the C-6 and C-8 positions of the octanoyl moiety bound to the lipoyl domains of lipoate-dependent enzymes, thereby converting the octanoylated domains into lipoylated derivatives. The polypeptide is Lipoyl synthase (Pelobacter propionicus (strain DSM 2379 / NBRC 103807 / OttBd1)).